Reading from the N-terminus, the 126-residue chain is uncharacterized protein (126 aa).

The next 2 membrane-spanning stretches (helical) occupy residues 40–57 (IDKW…VSFF) and 72–94 (ILIA…ILGG).

It is found in the cell membrane. This is an uncharacterized protein from Pasteurella multocida (strain Pm70).